A 94-amino-acid chain; its full sequence is Large ribosomal subunit protein bL27 (94 aa).

Positions 1-9 are excised as a propeptide; it reads MLRLDLQFF.

The protein belongs to the bacterial ribosomal protein bL27 family. In terms of processing, the N-terminus is cleaved by ribosomal processing cysteine protease Prp.

This chain is Large ribosomal subunit protein bL27, found in Bacillus pumilus (strain SAFR-032).